Consider the following 112-residue polypeptide: Nitrogenase-stabilizing/protective protein NifW (112 aa).

It belongs to the NifW family. Homotrimer; associates with NifD.

May protect the nitrogenase Fe-Mo protein from oxidative damage. The chain is Nitrogenase-stabilizing/protective protein NifW from Paraburkholderia xenovorans (strain LB400).